The sequence spans 130 residues: Anti-adapter protein IraD (130 aa).

This sequence belongs to the GpW/Gp25 family. IraD subfamily. Interacts with RssB.

The protein localises to the cytoplasm. Inhibits RpoS proteolysis by regulating RssB activity, thereby increasing the stability of the sigma stress factor RpoS during oxidative stress. Its effect on RpoS stability is due to its interaction with RssB, which probably blocks the interaction of RssB with RpoS, and the consequent delivery of the RssB-RpoS complex to the ClpXP protein degradation pathway. The polypeptide is Anti-adapter protein IraD (Escherichia coli O45:K1 (strain S88 / ExPEC)).